The chain runs to 142 residues: Hemoglobin subunit theta-1 (142 aa).

In terms of domain architecture, Globin spans 2 to 142 (ALSAEDRALV…VISALVSEYR (141 aa)). 2 residues coordinate heme b: H59 and H88.

This sequence belongs to the globin family.

The sequence is that of Hemoglobin subunit theta-1 (HBQ1) from Homo sapiens (Human).